The chain runs to 110 residues: Putative pterin-4-alpha-carbinolamine dehydratase (110 aa).

This sequence belongs to the pterin-4-alpha-carbinolamine dehydratase family.

The catalysed reaction is (4aS,6R)-4a-hydroxy-L-erythro-5,6,7,8-tetrahydrobiopterin = (6R)-L-erythro-6,7-dihydrobiopterin + H2O. The sequence is that of Putative pterin-4-alpha-carbinolamine dehydratase from Vibrio vulnificus (strain CMCP6).